Here is a 738-residue protein sequence, read N- to C-terminus: Protein ALEX (738 aa).

6 disordered regions span residues 1 to 105, 155 to 188, 237 to 350, 387 to 516, 528 to 578, and 611 to 689; these read MSPS…EEAM, REDYSPPPEESVPFQLDGEEFGGDSPPPDSASHA, TTFP…LPKP, MSGQ…LGQP, GEPG…LDPP, and GMRL…RPRI. Residues 257 to 273 show a composition bias toward polar residues; that stretch reads GSTTTPLSIWTAPQSQV. Basic and acidic residues predominate over residues 279 to 301; the sequence is KSREPQLRASTQRDPHLSDKQPR. Polar residues predominate over residues 387–396; the sequence is MSGQNQTEGQ. Pro residues-rich tracts occupy residues 410-438, 448-467, and 476-485; these read QPPPPPPSQPPSQPLSQPPSQPPSQPPSQ, PSLPPGQSPTPKRSPQPRQP, and PGQPPSPLRS. 3 stretches are compositionally biased toward low complexity: residues 542–564, 615–626, and 656–671; these read PSLPAQQLPPEQPLLPAQSLPAG, RPASARSSPPAM, and ATRSATSSPEPSEAAS.

This sequence belongs to the ALEX family. Interacts with the N-terminal region of the XLas isoforms of guanine nucleotide-binding protein G(s) subunit alpha.

The protein resides in the cell membrane. Its subcellular location is the cell projection. It is found in the ruffle. May inhibit the adenylyl cyclase-stimulating activity of guanine nucleotide-binding protein G(s) subunit alpha which is produced from the same locus in a different open reading frame. The protein is Protein ALEX of Rattus norvegicus (Rat).